The chain runs to 572 residues: Urease subunit alpha (572 aa).

A Urease domain is found at 134–572; sequence AGIDSHIHLI…AAMNQRYFFG (439 aa). Positions 139, 141, and 222 each coordinate Ni(2+). Position 222 is an N6-carboxylysine (lysine 222). Histidine 224 provides a ligand contact to substrate. Ni(2+)-binding residues include histidine 251 and histidine 277. Catalysis depends on histidine 325, which acts as the Proton donor. Ni(2+) is bound at residue aspartate 365.

It belongs to the metallo-dependent hydrolases superfamily. Urease alpha subunit family. Heterotrimer of UreA (gamma), UreB (beta) and UreC (alpha) subunits. Three heterotrimers associate to form the active enzyme. It depends on Ni cation as a cofactor. Carboxylation allows a single lysine to coordinate two nickel ions.

It is found in the cytoplasm. It catalyses the reaction urea + 2 H2O + H(+) = hydrogencarbonate + 2 NH4(+). It functions in the pathway nitrogen metabolism; urea degradation; CO(2) and NH(3) from urea (urease route): step 1/1. The polypeptide is Urease subunit alpha (Yersinia enterocolitica serotype O:8 / biotype 1B (strain NCTC 13174 / 8081)).